A 936-amino-acid chain; its full sequence is Protocadherin gamma-A10 (936 aa).

The first 32 residues, 1 to 32 (MAAQRNRSKESKDCSGLVLLCLFFGIPWEAGA), serve as a signal peptide directing secretion. 6 consecutive Cadherin domains span residues 33–137 (RQIS…APTF), 138–246 (QAEN…APVF), 247–351 (TLPE…SPEL), 352–456 (TITS…PPTF), 457–566 (SQVS…APEI), and 574–687 (DGST…SPAN). At 33–696 (RQISYSIPEE…NSETSDLTLY (664 aa)) the chain is on the extracellular side. Asparagine 51 carries N-linked (GlcNAc...) asparagine glycosylation. N-linked (GlcNAc...) asparagine glycans are attached at residues asparagine 423 and asparagine 549. Residues 697-717 (LVVAVAAVSCVFLAFVIVLLA) traverse the membrane as a helical segment. Residues 718–936 (LRLRRWHKSR…KKKSGKKEKK (219 aa)) lie on the Cytoplasmic side of the membrane. Disordered regions lie at residues 801–845 (SKFP…WPNN) and 906–936 (ATLTNAAGKRDGKAPAGGNGNKKKSGKKEKK). Residues 820–845 (WRFSQAQRPGTSGSQNGDDTGTWPNN) show a composition bias toward polar residues. The span at 926-936 (NKKKSGKKEKK) shows a compositional bias: basic residues.

It localises to the cell membrane. Functionally, potential calcium-dependent cell-adhesion protein. May be involved in the establishment and maintenance of specific neuronal connections in the brain. In Pan troglodytes (Chimpanzee), this protein is Protocadherin gamma-A10 (PCDHGA10).